Consider the following 1097-residue polypeptide: MAGYGHSTAGGFGSGSGSGPPGPQYMLPQYDEGDDPDADATPAGQGVRLLTNLDNSSYISVSEITSQSSHRDNIRPSRLRQAYEPSIDARTYEPSLDTRTYEPSISDRRHMYEPSIDERSSYMDPPRIPPPDGGSYVSSYMGTESMVSGHGRPWSPESATGYRVPPQGRYEPSEIDGHARPGTPGSSYGNARRPLPSAPAPLHYNSPSRAASHYPRYHGGYADDVTVSMGPDDDRTDIFGPETDLSETRHLNDAYGFRSSQITLSEDPHGTHARSRYDDEDDVSTTYSSNTGTSASGVDKFEHYGPIPEEGKHERRGVRPPQMSRKEVQLINGELVLECKIPTILYSFLPRRDEVEFTHMRYTAVTCDPDDFVARGYKLRQNIGRTARETELFICVTMYNEDEFGFTRTMHAVMKNISHFCSRNKSRTWGADGWQKIVVCVVSDGREIIHPRTLDALAAMGVYQHGIAKNFVNQKAVQAHVYEYTTQVSLDSDLKFKGAEKGIVPCQMIFCLKEKNQKKLNSHRWFFNAFGKALNPNVCILLDVGTRPGGTSLYHLWKAFDTDSNVAGACGEIKAMKGRFGGNLLNPLVASQNFEYKMSNILDKPLESVFGYITVLPGALSAYRYHALQNDETGHGPLSQYFKGETLHGQHADVFTANMYLAEDRILCWELVAKRGERWVLKYVKGCTGETDVPDTVPEFVSQRRRWLNGAFFAAVYSLVHFRQIWKTDHTFMRKALLHVEFLYHLLQLLFTYFSLANFYLAFYFIAGGLADPHVDPFNSDGHVARIIFNILRYVCVLLICTQFILSLGNRPQGAKRMYLASMIIYAVIMVYTTFATIFIVVRQIQPSQKSDDKPDLELGNNVFTNLIVSVASTLGLYFVMSFLYLDPWHMFTSAIQYFVLLPSYICTLQIYAFCNTHDVTWGTKGDNVMRTDLGGAIGKGSTVELEMPSDQLDIDSGYDECLRNLRDRVMVPAVPVSEDQLQQDYYKSVRTYMVVSWMVANATLAMAVSEAYGDSEIGDNFYLRFILWAVAALALFRALGSTTFAAINLVSALVEGRVRLRLNMKGFRWIKEKWGDADVKGKFEGLGDRARGLARR.

Residues 1–46 form a disordered region; that stretch reads MAGYGHSTAGGFGSGSGSGPPGPQYMLPQYDEGDDPDADATPAGQG. Topologically, residues 1–748 are extracellular; the sequence is MAGYGHSTAG…HVEFLYHLLQ (748 aa). Residues 8 to 19 show a composition bias toward gly residues; sequence TAGGFGSGSGSG. N-linked (GlcNAc...) asparagine glycosylation is present at Asn55. Disordered stretches follow at residues 148 to 217 and 259 to 322; these read SGHG…YPRY and SSQI…RPPQ. Residues 284 to 296 are compositionally biased toward polar residues; it reads STTYSSNTGTSAS. A compositionally biased stretch (basic and acidic residues) spans 299-313; that stretch reads DKFEHYGPIPEEGKH. Asn416 and Asn424 each carry an N-linked (GlcNAc...) asparagine glycan. Residues 749 to 769 traverse the membrane as a helical segment; the sequence is LLFTYFSLANFYLAFYFIAGG. Topologically, residues 770-786 are cytoplasmic; it reads LADPHVDPFNSDGHVAR. A helical membrane pass occupies residues 787 to 807; sequence IIFNILRYVCVLLICTQFILS. Residues 808–821 are Extracellular-facing; the sequence is LGNRPQGAKRMYLA. A helical membrane pass occupies residues 822–842; that stretch reads SMIIYAVIMVYTTFATIFIVV. Residues 843–865 are Cytoplasmic-facing; the sequence is RQIQPSQKSDDKPDLELGNNVFT. The chain crosses the membrane as a helical span at residues 866–886; it reads NLIVSVASTLGLYFVMSFLYL. Topologically, residues 887 to 894 are extracellular; it reads DPWHMFTS. Residues 895 to 915 traverse the membrane as a helical segment; sequence AIQYFVLLPSYICTLQIYAFC. At 916–993 the chain is on the cytoplasmic side; sequence NTHDVTWGTK…QDYYKSVRTY (78 aa). A helical transmembrane segment spans residues 994 to 1014; that stretch reads MVVSWMVANATLAMAVSEAYG. The Extracellular segment spans residues 1015 to 1025; that stretch reads DSEIGDNFYLR. The chain crosses the membrane as a helical span at residues 1026 to 1046; that stretch reads FILWAVAALALFRALGSTTFA. Residues 1047–1097 are Cytoplasmic-facing; it reads AINLVSALVEGRVRLRLNMKGFRWIKEKWGDADVKGKFEGLGDRARGLARR.

This sequence belongs to the chitin synthase family.

Its subcellular location is the cell membrane. It carries out the reaction [(1-&gt;4)-N-acetyl-beta-D-glucosaminyl](n) + UDP-N-acetyl-alpha-D-glucosamine = [(1-&gt;4)-N-acetyl-beta-D-glucosaminyl](n+1) + UDP + H(+). In terms of biological role, polymerizes chitin, a structural polymer of the cell wall and septum, by transferring the sugar moiety of UDP-GlcNAc to the non-reducing end of the growing chitin polymer. This is Chitin synthase 2 (chs-2) from Neurospora crassa (strain ATCC 24698 / 74-OR23-1A / CBS 708.71 / DSM 1257 / FGSC 987).